The sequence spans 318 residues: HPr kinase/phosphorylase (318 aa).

Catalysis depends on residues His143 and Lys164. 158–165 contributes to the ATP binding site; the sequence is GKSGVGKS. Residue Ser165 coordinates Mg(2+). Asp182 functions as the Proton acceptor; for phosphorylation activity. Proton donor; for dephosphorylation activity in the catalytic mechanism. The tract at residues 206–215 is important for the catalytic mechanism of both phosphorylation and dephosphorylation; that stretch reads MEIRGLGILN. A Mg(2+)-binding site is contributed by Glu207. Residue Arg248 is part of the active site. The interval 269 to 274 is important for the catalytic mechanism of dephosphorylation; it reads PVKPGR.

The protein belongs to the HPrK/P family. As to quaternary structure, homohexamer. It depends on Mg(2+) as a cofactor.

It carries out the reaction [HPr protein]-L-serine + ATP = [HPr protein]-O-phospho-L-serine + ADP + H(+). The enzyme catalyses [HPr protein]-O-phospho-L-serine + phosphate + H(+) = [HPr protein]-L-serine + diphosphate. Its function is as follows. Catalyzes the ATP- as well as the pyrophosphate-dependent phosphorylation of a specific serine residue in HPr, a phosphocarrier protein of the phosphoenolpyruvate-dependent sugar phosphotransferase system (PTS). HprK/P also catalyzes the pyrophosphate-producing, inorganic phosphate-dependent dephosphorylation (phosphorolysis) of seryl-phosphorylated HPr (P-Ser-HPr). The sequence is that of HPr kinase/phosphorylase from Leptospira borgpetersenii serovar Hardjo-bovis (strain JB197).